The sequence spans 349 residues: Soluble TNF receptor II (349 aa).

An N-terminal signal peptide occupies residues 1-19 (MKSVLYSYILFLSCIIING). TNFR-Cys repeat units lie at residues 31 to 65 (KCKD…NTQC) and 67 to 108 (PCGS…NRIC). 6 disulfide bridges follow: C32-C43, C44-C57, C47-C65, C68-C83, C86-C100, and C90-C108. N-linked (GlcNAc...) asparagine; by host glycans are attached at residues N101, N189, and N248.

The protein belongs to the orthopoxvirus OPG002 family.

Its function is as follows. Inhibits host immune defense by binding to host TNF and various chemokines in the extracellular space. Binds host CC chemokines (beta chemokines) and CXC chemokines (alpha chemokines). This chain is Soluble TNF receptor II (OPG002), found in Camelus.